The primary structure comprises 82 residues: Large ribosomal subunit protein bL31B (82 aa).

The protein belongs to the bacterial ribosomal protein bL31 family. Type B subfamily. In terms of assembly, part of the 50S ribosomal subunit after the end of exponential growth.

While neither of the L31 paralogs is essential, this protein does not seem to function as the main L31 protein. Has a higher affinity for 70S ribosomes than the zinc-containing L31 paralog; is able to displace it to varying extents, even under zinc-replete conditions. The protein is Large ribosomal subunit protein bL31B (rpmE2) of Bacillus subtilis (strain 168).